We begin with the raw amino-acid sequence, 229 residues long: tRNA (guanine-N(7)-)-methyltransferase (229 aa).

S-adenosyl-L-methionine-binding residues include E59, E84, D111, and D134. D134 is a catalytic residue. K138 serves as a coordination point for substrate. The interval 140 to 145 (KHNKRR) is interaction with RNA. Residues D170 and 207–210 (TKFE) contribute to the substrate site.

Belongs to the class I-like SAM-binding methyltransferase superfamily. TrmB family.

It catalyses the reaction guanosine(46) in tRNA + S-adenosyl-L-methionine = N(7)-methylguanosine(46) in tRNA + S-adenosyl-L-homocysteine. It functions in the pathway tRNA modification; N(7)-methylguanine-tRNA biosynthesis. In terms of biological role, catalyzes the formation of N(7)-methylguanine at position 46 (m7G46) in tRNA. In Saccharophagus degradans (strain 2-40 / ATCC 43961 / DSM 17024), this protein is tRNA (guanine-N(7)-)-methyltransferase.